The sequence spans 668 residues: Protein ENTREP3 (668 aa).

3 helical membrane passes run 34-54 (LLTL…FSMV), 67-87 (SCPS…IVSW), and 91-111 (FTLV…LSMA). Residue asparagine 160 is glycosylated (N-linked (GlcNAc...) asparagine). The chain crosses the membrane as a helical span at residues 174–194 (LFSVCGLTICAAIICTLSAIV). Serine 358 and serine 389 each carry phosphoserine. Disordered stretches follow at residues 386-419 (FEES…PTAA), 442-503 (RVPR…SSDT), and 550-570 (SAEK…SGPA). Over residues 398-407 (AARSYSCSAP) the composition is skewed to low complexity. Serine 493 is subject to Phosphoserine. Phosphoserine is present on serine 574. Disordered stretches follow at residues 597–620 (KAPD…WGRP) and 645–668 (GRRL…ETGL). Positions 655-668 (HSLSLNGGSRETGL) are enriched in polar residues.

This sequence belongs to the ENTREP family. As to quaternary structure, may interact with WWOX. Widely expressed.

The protein resides in the membrane. The chain is Protein ENTREP3 from Homo sapiens (Human).